The primary structure comprises 460 residues: Bifunctional protein GlmU (460 aa).

Residues 1–229 are pyrophosphorylase; the sequence is MTNYAIILAA…FNESLGVNDR (229 aa). UDP-N-acetyl-alpha-D-glucosamine-binding positions include 8–11, Lys-22, Gln-72, and 77–78; these read LAAG and GT. Asp-102 lines the Mg(2+) pocket. Residues Gly-139, Glu-154, Asn-169, and Asn-227 each contribute to the UDP-N-acetyl-alpha-D-glucosamine site. Position 227 (Asn-227) interacts with Mg(2+). The segment at 230–250 is linker; it reads VALATAETVMRQRITQKHMVN. An N-acetyltransferase region spans residues 251 to 460; that stretch reads GVTFQNPETV…RLAHHPSRSK (210 aa). Residues Arg-332 and Lys-350 each coordinate UDP-N-acetyl-alpha-D-glucosamine. His-362 functions as the Proton acceptor in the catalytic mechanism. UDP-N-acetyl-alpha-D-glucosamine contacts are provided by Tyr-365 and Asn-376. Acetyl-CoA is bound by residues Ala-379, 385-386, Ser-404, Ala-422, and Arg-439; that span reads NY.

It in the N-terminal section; belongs to the N-acetylglucosamine-1-phosphate uridyltransferase family. In the C-terminal section; belongs to the transferase hexapeptide repeat family. Homotrimer. Requires Mg(2+) as cofactor.

It is found in the cytoplasm. The catalysed reaction is alpha-D-glucosamine 1-phosphate + acetyl-CoA = N-acetyl-alpha-D-glucosamine 1-phosphate + CoA + H(+). It catalyses the reaction N-acetyl-alpha-D-glucosamine 1-phosphate + UTP + H(+) = UDP-N-acetyl-alpha-D-glucosamine + diphosphate. It functions in the pathway nucleotide-sugar biosynthesis; UDP-N-acetyl-alpha-D-glucosamine biosynthesis; N-acetyl-alpha-D-glucosamine 1-phosphate from alpha-D-glucosamine 6-phosphate (route II): step 2/2. Its pathway is nucleotide-sugar biosynthesis; UDP-N-acetyl-alpha-D-glucosamine biosynthesis; UDP-N-acetyl-alpha-D-glucosamine from N-acetyl-alpha-D-glucosamine 1-phosphate: step 1/1. It participates in bacterial outer membrane biogenesis; LPS lipid A biosynthesis. Catalyzes the last two sequential reactions in the de novo biosynthetic pathway for UDP-N-acetylglucosamine (UDP-GlcNAc). The C-terminal domain catalyzes the transfer of acetyl group from acetyl coenzyme A to glucosamine-1-phosphate (GlcN-1-P) to produce N-acetylglucosamine-1-phosphate (GlcNAc-1-P), which is converted into UDP-GlcNAc by the transfer of uridine 5-monophosphate (from uridine 5-triphosphate), a reaction catalyzed by the N-terminal domain. The chain is Bifunctional protein GlmU from Streptococcus pyogenes serotype M6 (strain ATCC BAA-946 / MGAS10394).